The primary structure comprises 1627 residues: Surface protein G (1627 aa).

An N-terminal signal peptide occupies residues 1-50 (MRDKKGPVNKRVDFLSNKLNKYSIRKFTVGTASILIGSLMYLGTQQEAEA). The YSIRK-G/S signaling motif motif lies at 22-33 (YSIRKFTVGTAS). The segment at 51–418 (AENNIENPTT…KGSEFTFTPE (368 aa)) is ligand binding A region, squamous nasal epithelial cell binding. Disordered regions lie at residues 74–143 (EVTN…VRKA), 440–467 (KFNPDLAPGTEKVTREGQKGEKTITTPT), and 496–1601 (EYGP…TGLE). 32 stretches are compositionally biased toward basic and acidic residues: residues 96 to 120 (DTIEHEPSVKAEDISKKEDTPKEVA), 451 to 461 (KVTREGQKGEK), 505 to 523 (GHRDEFDPKLPTGEKEEVP), 554 to 570 (SIVEKEEIPFEKERKFN), 579 to 589 (KVTREGQKGEK), 606 to 619 (SKGESKEEITKDPI), 633 to 651 (GHRDEFDPKLPTGEKEEVP), 682 to 698 (SIVEKEEIPFEKERKFN), 707 to 717 (KVTREGQKGEK), 736 to 747 (GEPKEEITKDPI), 761 to 779 (GHRDEFDPKLPTGEKEEVP), 810 to 826 (SIVEKEEIPFKKERKFN), 835 to 845 (KVTREGQKGEK), 862 to 875 (SKGESKEEITKDPI), 889 to 907 (GHRDEFDPKLPTGEKEEVP), 938 to 954 (SIVEKEEIPFEKERKFN), 963 to 973 (KVTREGQKGEK), 990 to 1003 (SKGESKEEITKDPI), 1017 to 1035 (GHRDEFDPKLPTGEKEEVP), 1066 to 1082 (SIVEKEEIPFKKERKFN), 1091 to 1101 (KVTREGQKGEK), 1118 to 1131 (SKGESKEEITKDPI), 1145 to 1163 (GHRDEFDPKLPTGEKEEVP), 1194 to 1210 (SIVEKEEIPFEKERKFN), 1219 to 1229 (KVTREGQKGEK), 1246 to 1259 (SKGESKEEITKDPI), 1273 to 1291 (GHRDEFDPKLPTGEKEEVP), 1322 to 1338 (SIVEKEEIPFEKERKFN), 1347 to 1357 (KVTREGQKGEK), 1374 to 1387 (SKGESKEEITKDPV), 1431 to 1442 (KVIEEPVDDVIK), and 1459 to 1478 (FETKREFNPKLQPGEERVKQ). The G5 1 domain occupies 419–501 (APKTITELEK…NELTEYGPET (83 aa)). Residues 547 to 629 (YGPVKGDSIV…NELTEYGPET (83 aa)) enclose the G5 2 domain. Positions 675–757 (YGPVKGDSIV…NELTEYGPET (83 aa)) constitute a G5 3 domain. The G5 4 domain maps to 803–885 (YGPVKGDSIV…NELTEYGPET (83 aa)). Positions 931 to 1013 (YGPVKGDSIV…NELTEYGPET (83 aa)) constitute a G5 5 domain. The G5 6 domain maps to 1059–1141 (YGPVKGDSIV…NELTEYGPET (83 aa)). The region spanning 1187–1269 (YGPVKGDSIV…NELTEYGPET (83 aa)) is the G5 7 domain. Residues 1315–1397 (YGPVKGDSIV…NELTEFGGEK (83 aa)) enclose the G5 8 domain. The G5 9 domain maps to 1443-1525 (HGPKTGTPET…DKIVEFGGEK (83 aa)). The segment covering 1481–1495 (QPGSKTITTPITVNP) has biased composition (polar residues). Residues 1509–1539 (EITKQPVDKIVEFGGEKPKDPKGPENPEKPS) are compositionally biased toward basic and acidic residues. The LPXTG sorting signal signature appears at 1595–1599 (LPKTG). Threonine 1598 carries the pentaglycyl murein peptidoglycan amidated threonine modification. Residues 1599-1627 (GLESTQKGLIFSSIIGIAGLMLLARRRKN) constitute a propeptide, removed by sortase.

It is found in the secreted. The protein localises to the cell wall. Promotes adhesion of bacterial cells to human squamous nasal epithelial cells, a phenomenon which is likely to be important in nasal colonization. Forms short, extremely dense and thin fibrils all over the bacterial surface. Does not bind to either buccal cells or non-differentiated keratinocytes. Promotes cellular aggregation leading to biofilm formation. In Staphylococcus aureus (strain NCTC 8325 / PS 47), this protein is Surface protein G (sasG).